The following is a 288-amino-acid chain: Release factor glutamine methyltransferase (288 aa).

Residues glycine 123–glycine 127, aspartate 146, and asparagine 190 each bind S-adenosyl-L-methionine. Asparagine 190–tyrosine 193 is a substrate binding site.

Belongs to the protein N5-glutamine methyltransferase family. PrmC subfamily.

The enzyme catalyses L-glutaminyl-[peptide chain release factor] + S-adenosyl-L-methionine = N(5)-methyl-L-glutaminyl-[peptide chain release factor] + S-adenosyl-L-homocysteine + H(+). Its function is as follows. Methylates the class 1 translation termination release factors RF1/PrfA and RF2/PrfB on the glutamine residue of the universally conserved GGQ motif. In Bacillus subtilis (strain 168), this protein is Release factor glutamine methyltransferase.